The primary structure comprises 1165 residues: Tectonin beta-propeller repeat-containing protein 1 (1165 aa).

TECPR repeat units lie at residues 209 to 240 (LSVW…SLLD), 254 to 285 (DLLW…SIVE), 301 to 332 (SVVW…IEMV), and 344 to 376 (DQVW…KAIV). Residues 404 to 486 (RGSGESAPSD…GPATTPAELP (83 aa)) form a disordered region. One can recognise a PH domain in the interval 611 to 717 (KTGALQWWCD…WLALLSLSCC (107 aa)). A TECPR 5 repeat occupies 729–756 (QAIWSITCKGDIFVSEPSPDLEAHEHPL). Ser938 and Ser949 each carry phosphoserine. TECPR repeat units lie at residues 953-984 (IALW…LHVG), 998-1029 (YQVW…YHIP), 1044-1075 (TSVY…EHVS), and 1087-1127 (DQVW…DYGI). Residues 1140–1165 (ATRAPRSSSQEQEPSAPPEAHDPVCC) are disordered. Over residues 1143–1153 (APRSSSQEQEP) the composition is skewed to low complexity.

The protein belongs to the TECPR1 family. Interacts with ATG5; the interaction is direct. Interacts with WIPI2. Interacts with the ATG5-ATG12 conjugate, the interaction is however mutually exclusive with ATG16, since it does not interact with ATG12-ATG5-ATG16 complex.

It is found in the cytoplasmic vesicle. Its subcellular location is the autophagosome membrane. The protein localises to the lysosome membrane. Functionally, tethering factor involved in autophagy. Involved in autophagosome maturation by promoting the autophagosome fusion with lysosomes: acts by associating with both the ATG5-ATG12 conjugate and phosphatidylinositol-3-phosphate (PtdIns(3)P) present at the surface of autophagosomes. Also involved in selective autophagy against bacterial pathogens, by being required for phagophore/preautophagosomal structure biogenesis and maturation. This Pongo abelii (Sumatran orangutan) protein is Tectonin beta-propeller repeat-containing protein 1 (TECPR1).